The chain runs to 177 residues: Small ribosomal subunit protein bS21m (177 aa).

A mitochondrion-targeting transit peptide spans 1 to 17 (MLKSTLRLSRISLRRGF).

Belongs to the bacterial ribosomal protein bS21 family. Component of the mitochondrial small ribosomal subunit (mt-SSU). Mature yeast 74S mitochondrial ribosomes consist of a small (37S) and a large (54S) subunit. The 37S small subunit contains a 15S ribosomal RNA (15S mt-rRNA) and 34 different proteins. The 54S large subunit contains a 21S rRNA (21S mt-rRNA) and 46 different proteins.

The protein localises to the mitochondrion. In terms of biological role, component of the mitochondrial ribosome (mitoribosome), a dedicated translation machinery responsible for the synthesis of mitochondrial genome-encoded proteins, including at least some of the essential transmembrane subunits of the mitochondrial respiratory chain. The mitoribosomes are attached to the mitochondrial inner membrane and translation products are cotranslationally integrated into the membrane. This chain is Small ribosomal subunit protein bS21m (MRP21), found in Saccharomyces cerevisiae (strain ATCC 204508 / S288c) (Baker's yeast).